The chain runs to 149 residues: Peptide deformylase (149 aa).

Fe cation is bound by residues Cys92 and His134. Glu135 is a catalytic residue. His138 contributes to the Fe cation binding site.

Belongs to the polypeptide deformylase family. The cofactor is Fe(2+).

The catalysed reaction is N-terminal N-formyl-L-methionyl-[peptide] + H2O = N-terminal L-methionyl-[peptide] + formate. Its function is as follows. Removes the formyl group from the N-terminal Met of newly synthesized proteins. Requires at least a dipeptide for an efficient rate of reaction. N-terminal L-methionine is a prerequisite for activity but the enzyme has broad specificity at other positions. This is Peptide deformylase from Buchnera aphidicola subsp. Cinara cedri (strain Cc).